The following is a 777-amino-acid chain: MLDLTNKESESSDNGNSKYEDSIDGREVGTSKPFKEERSLEDLQADLADMAVWMEGLDATKLPLNDPQLLCNGRAFSEVLHNVDKNFFTDGWLETMPENRTTNIMVFRSCTRKLWRKMFDYVNHINRTVVSSRWTDIHERIDGIYESDLPAMVNLGMAVVTLAHIGKNAKRFVDYSKALTSTHKSMMSNVAKMVTTVIDEMPENPCFHEISELHGSQSELNSLSESSGKLNGNGSSERRSNADQILVDAELEIERLRTETENQRKEIERLTKSFETAQHDMSSNSESGDISILEKQNEELRQKRRELEEKNLELDAAVDQFKGIVFELTNENDVLRRSDKERQRLQTVLDAAQSDLDEWKTVANQYQKEAELSKQQDKEIKELLSQNKALKSRLDHHVKSATLEDANKNGIAQLRTQVGGLTALNTELKASLDSKKRCVEQLEIQLIQHKEKVKELEDRKDELIEERNRLENQLIFKEAVTPRSLHESMFEAGNLSFEPFSEKNTLPLEIENKRLTERIQELESLEPLKGELITLKSKNGVLEEEKLFATKQIEELQQQIEDLQENLLKNQEHASGDVVGLKIQLEKAEVEAQQMREAKMRAETNQAQVDEILKKRTAELEVNATALQKAKAVIDELEYNSRPVSEDSMTSVQAFKEMKEENEKLRQKVEKLEIELNTVTQGFEQENRLLTSASHQQVLNRSIDEVMSMRAHAGSEEPQTLLDTQKMSGALPWRSLASETRRELPTAMASILVLGFLVFIAWMFININSALNAPPNA.

Composition is skewed to basic and acidic residues over residues 1–10 (MLDLTNKESE) and 18–36 (KYED…PFKE). Residues 1–36 (MLDLTNKESESSDNGNSKYEDSIDGREVGTSKPFKE) form a disordered region. Residues 1–234 (MLDLTNKESE…ESSGKLNGNG (234 aa)) are interaction with dli-1. The 126-residue stretch at 44–169 (QADLADMAVW…VTLAHIGKNA (126 aa)) folds into the Calponin-homology (CH) domain. Disordered stretches follow at residues 217–242 (QSEL…RSNA) and 273–292 (SFET…DISI). Over residues 218–235 (SELNSLSESSGKLNGNGS) the composition is skewed to low complexity. 2 coiled-coil regions span residues 236–399 (SERR…HHVK) and 425–688 (NTEL…QENR). A compositionally biased stretch (polar residues) spans 273-288 (SFETAQHDMSSNSESG). Residues 747–767 (AMASILVLGFLVFIAWMFINI) traverse the membrane as a helical segment. The interaction with unc-84 stretch occupies residues 749–777 (ASILVLGFLVFIAWMFININSALNAPPNA).

This sequence belongs to the hook family. Homodimer. Interacts with the dynein subunit dli-1 via its N-terminus. May interact with microtubules. Interacts with sut-2. Interacts (via C-terminus) with unc-84 (via C-terminus); the interaction is direct. Expressed in the syncytial gonad, oocytes, and in all cells during the development of the early embryo.

The protein resides in the nucleus membrane. It localises to the cytoplasm. Its subcellular location is the cytoskeleton. The protein localises to the microtubule organizing center. It is found in the centrosome. Cytoskeletal linker protein, which is essential for attachment of the centrosome to the nucleus. Required for dynein localization to the nuclear envelope. Forms a LINC (LInker of Nucleoskeleton and Cytoskeleton) complex together with unc-84, that may be involved in DNA damage repair. This is Zygote defective protein 12 from Caenorhabditis elegans.